A 663-amino-acid polypeptide reads, in one-letter code: Terreic acid cluster-specific transcription factor atF (663 aa).

Polar residues predominate over residues 1–20 (MFATFNSSMDNRSSANSPVA). Disordered regions lie at residues 1-28 (MFAT…PKRT) and 55-126 (TRGV…SPSQ). Residues 34–60 (CDWCRLNRVKCDDGQPCKNCRTRGVRC) constitute a DNA-binding region (zn(2)-C6 fungal-type). Residues 55–64 (TRGVRCRKGS) show a composition bias toward basic residues. Low complexity-rich tracts occupy residues 73-88 (SSSA…QGAQ) and 105-125 (ATTS…PSPS).

It localises to the nucleus. Transcription factor that regulates the expression of the gene cluster that mediates the biosynthesis of terreic acid, a quinone epoxide inhibitor of Bruton's tyrosine kinase. This is Terreic acid cluster-specific transcription factor atF from Aspergillus terreus (strain NIH 2624 / FGSC A1156).